We begin with the raw amino-acid sequence, 1039 residues long: Serine/threonine-protein kinase Tao (1039 aa).

In terms of domain architecture, Protein kinase spans 27–280 (FEDLREIGHG…SAKLLTHAYV (254 aa)). ATP contacts are provided by residues 33–41 (IGHGSFGAV) and lysine 56. The Proton acceptor role is filled by aspartate 150. Disordered stretches follow at residues 324–457 (SAVG…NSAS), 485–508 (GGGG…LADR), 629–648 (HQQD…KKLH), and 677–707 (WKRE…KQHE). Polar residues predominate over residues 341 to 350 (SSKSNSITSE). Over residues 359–376 (SAASSQSSSSNSIPAAAQ) the composition is skewed to low complexity. The span at 377–387 (NHHHIAAHHHQ) shows a compositional bias: basic residues. 2 stretches are compositionally biased toward low complexity: residues 388–397 (QAASAAVAAA) and 413–429 (PSGQ…VSRN). The span at 444–454 (HSMNNNVTPTN) shows a compositional bias: polar residues. Positions 485–500 (GGGGTGTGGSGGGSPA) are enriched in gly residues. Coiled-coil stretches lie at residues 631 to 765 (QDVE…MLLK) and 835 to 993 (KQFR…DNES). Positions 677 to 693 (WKRELSMDESTPKRQRD) are enriched in basic and acidic residues.

It belongs to the protein kinase superfamily. STE Ser/Thr protein kinase family. STE20 subfamily. As to quaternary structure, interacts with Schip1; the interaction enhances Tao kinase activity. The cofactor is Mg(2+). In terms of processing, autophosphorylated. In the posterior midgut, expressed in almost all intestinal cell types including intestinal stem cells and enterocytes (at protein level). Maternally expressed, ubiquitously distributed in the egg and early embryo and enriched in the germ plasm at the posterior pole of the early embryo including the pole cells.

It is found in the cytoplasm. The protein localises to the cytoskeleton. Its subcellular location is the spindle. It localises to the membrane. The protein resides in the perikaryon. It is found in the cell cortex. The protein localises to the cell projection. Its subcellular location is the axon. The enzyme catalyses L-seryl-[protein] + ATP = O-phospho-L-seryl-[protein] + ADP + H(+). It catalyses the reaction L-threonyl-[protein] + ATP = O-phospho-L-threonyl-[protein] + ADP + H(+). Its function is as follows. Serine/threonine-protein kinase which regulates the Hippo/SWH (Sav/Wts/Hpo) signaling pathway, a signaling pathway that plays a pivotal role in organ size control and tumor suppression by restricting proliferation and promoting apoptosis. The core of this pathway is composed of a kinase cascade wherein Hippo (hpo), in complex with its regulatory protein Salvador (sav), phosphorylates and activates Warts (wts) in complex with its regulatory protein Mats, which in turn phosphorylates and inactivates the Yorkie (yki) oncoprotein. In imaginal cells, phosphorylates and activates hpo and leads to repression of yki. In the midgut, negatively regulates the proliferation of intestinal stem cells through the Hippo/SWH pathway. Independent of the hippo/SWH pathway, regulates epithelial morphogenesis in follicle cells by promoting the endocytosis of Fas2 and reducing lateral adhesion between epithelial cells which, in turn, permits shrinking of the lateral membrane and initiates morphogenesis of the squamous epithelium. Required for the development of both the mushroom body and the ellipsoid body in the brain and may act as a negative regulator of the par-1 kinase. Negatively regulates the JNK pathway which increases sensitivity to ethanol exposure. Plays a role in the control of cell shape by negatively regulating the growth of microtubule plus-ends as they contact the actin-rich cell cortex. Required for the induction of apoptosis in pole cells by promoting expression of skl which enhances activity of the apoptosis activator hid. Functionally, induces in vitro expression of large, highly dynamic, microtubule-dependent lamellopodia-like cytoplasmic expansions which constantly probe the environment. In terms of biological role, induces in vitro expression of actin-dependent filopodia-like cytoplasmic protrusions which firmly attach to the substrate. Antagonizes the activity of isoform D. The sequence is that of Serine/threonine-protein kinase Tao from Drosophila melanogaster (Fruit fly).